The chain runs to 445 residues: Cytochrome b (445 aa).

Residues 2 to 49 (SGIPHDHYEPRTGIEKWLHSRLPIVALAYDTIMIPTPRNLNWMWIWGV) are Cytoplasmic-facing. Residues 50–67 (VLAFCLVLQIVTGIVLAM) traverse the membrane as a helical segment. At 68–94 (HYTPHVDLAFASVEHIMRNVNGGFMLR) the chain is on the periplasmic side. A helical membrane pass occupies residues 95-113 (YLHANGASLFFIAVYLHIF). Histidine 97 and histidine 111 together coordinate heme b. Residues 114-129 (RGLYYGSYKAPREVTW) lie on the Cytoplasmic side of the membrane. A helical membrane pass occupies residues 130–149 (IVGMLIYLAMMATAFMGYVL). The Periplasmic segment spans residues 150-193 (PWGQMSFWGATVITGLFGAIPGIGHSIQTWLLGGPAVDNATLNR). The chain crosses the membrane as a helical span at residues 194–216 (FFSLHYLLPFVIAALVAIHIWAF). Positions 198 and 212 each coordinate heme b. Over 217-252 (HSTGNNNPTGVEVRRTSKAEAQKDTVPFWPYFIIKD) the chain is Cytoplasmic. Residues 253–270 (VFALAVVLLVFFAIVGFM) traverse the membrane as a helical segment. Residues 271-329 (PNYLGHPDNYIEANPLSTPAHIVPEWYFLPFYAILRAFTADVWVVQIANFISFGIIDAK) lie on the Periplasmic side of the membrane. Residues 330–346 (FFGVLAMFGAILVMALV) traverse the membrane as a helical segment. At 347 to 364 (PWLDTSPVRSGRYRPMFK) the chain is on the cytoplasmic side. Residues 365–382 (IYFWLLAADFVILTWVGA) form a helical membrane-spanning segment. The Periplasmic segment spans residues 383-388 (QQTTFP). A helical membrane pass occupies residues 389–408 (YDWISLIASAYWFAYFLVIL). The Cytoplasmic portion of the chain corresponds to 409-445 (PILGAIEKPVAPPATIEEDFNAHYSPATGGTKTVVAE).

Belongs to the cytochrome b family. As to quaternary structure, the main subunits of complex b-c1 are: cytochrome b, cytochrome c1 and the Rieske protein. The cofactor is heme b.

Its subcellular location is the cell membrane. Functionally, component of the ubiquinol-cytochrome c reductase complex (complex III or cytochrome b-c1 complex), which is a respiratory chain that generates an electrochemical potential coupled to ATP synthesis. The polypeptide is Cytochrome b (petB) (Cereibacter sphaeroides (Rhodobacter sphaeroides)).